Reading from the N-terminus, the 223-residue chain is Chalcone--flavanone isomerase 2 (223 aa).

Substrate-binding residues include Thr-41, Asn-106, and Ser-183.

Belongs to the chalcone isomerase family.

The catalysed reaction is a chalcone = a flavanone.. The protein operates within secondary metabolite biosynthesis; flavonoid biosynthesis. Catalyzes the intramolecular cyclization of bicyclic chalcones into tricyclic (S)-flavanones. Responsible for the isomerization of 4,2',4',6'-tetrahydroxychalcone (also termed chalcone) into naringenin. The sequence is that of Chalcone--flavanone isomerase 2 (CHI2) from Arabidopsis thaliana (Mouse-ear cress).